The following is a 147-amino-acid chain: UPF0306 protein YhbP (147 aa).

This sequence belongs to the UPF0306 family.

This is UPF0306 protein YhbP from Salmonella agona (strain SL483).